The sequence spans 342 residues: Oxygen-dependent coproporphyrinogen-III oxidase (342 aa).

Ser98 contributes to the substrate binding site. A divalent metal cation-binding residues include His102 and His112. The active-site Proton donor is His112. 114–116 contacts substrate; it reads NYR. Residues His146 and His176 each coordinate a divalent metal cation. Positions 266-301 are important for dimerization; the sequence is YVEFNLVWDRGTIFGLQTNGRTESILMSLPPLARWE.

The protein belongs to the aerobic coproporphyrinogen-III oxidase family. In terms of assembly, homodimer. It depends on a divalent metal cation as a cofactor.

Its subcellular location is the cytoplasm. The catalysed reaction is coproporphyrinogen III + O2 + 2 H(+) = protoporphyrinogen IX + 2 CO2 + 2 H2O. The protein operates within porphyrin-containing compound metabolism; protoporphyrin-IX biosynthesis; protoporphyrinogen-IX from coproporphyrinogen-III (O2 route): step 1/1. Its function is as follows. Involved in the heme and chlorophyll biosynthesis. Catalyzes the aerobic oxidative decarboxylation of propionate groups of rings A and B of coproporphyrinogen-III to yield the vinyl groups in protoporphyrinogen-IX. This is Oxygen-dependent coproporphyrinogen-III oxidase from Prochlorococcus marinus (strain MIT 9515).